The primary structure comprises 264 residues: Glucosamine-6-phosphate deaminase (264 aa).

The active-site Proton acceptor; for enolization step is aspartate 67. The active-site For ring-opening step is asparagine 136. The active-site Proton acceptor; for ring-opening step is the histidine 138. Glutamate 143 acts as the For ring-opening step in catalysis.

The protein belongs to the glucosamine/galactosamine-6-phosphate isomerase family. NagB subfamily. As to quaternary structure, homohexamer.

The enzyme catalyses alpha-D-glucosamine 6-phosphate + H2O = beta-D-fructose 6-phosphate + NH4(+). The protein operates within amino-sugar metabolism; N-acetylneuraminate degradation; D-fructose 6-phosphate from N-acetylneuraminate: step 5/5. Functionally, catalyzes the reversible isomerization-deamination of glucosamine 6-phosphate (GlcN6P) to form fructose 6-phosphate (Fru6P) and ammonium ion. The polypeptide is Glucosamine-6-phosphate deaminase (Shewanella woodyi (strain ATCC 51908 / MS32)).